Here is a 185-residue protein sequence, read N- to C-terminus: ATP synthase subunit delta (185 aa).

This sequence belongs to the ATPase delta chain family. In terms of assembly, F-type ATPases have 2 components, F(1) - the catalytic core - and F(0) - the membrane proton channel. F(1) has five subunits: alpha(3), beta(3), gamma(1), delta(1), epsilon(1). F(0) has three main subunits: a(1), b(2) and c(10-14). The alpha and beta chains form an alternating ring which encloses part of the gamma chain. F(1) is attached to F(0) by a central stalk formed by the gamma and epsilon chains, while a peripheral stalk is formed by the delta and b chains.

The protein resides in the cell inner membrane. In terms of biological role, f(1)F(0) ATP synthase produces ATP from ADP in the presence of a proton or sodium gradient. F-type ATPases consist of two structural domains, F(1) containing the extramembraneous catalytic core and F(0) containing the membrane proton channel, linked together by a central stalk and a peripheral stalk. During catalysis, ATP synthesis in the catalytic domain of F(1) is coupled via a rotary mechanism of the central stalk subunits to proton translocation. Its function is as follows. This protein is part of the stalk that links CF(0) to CF(1). It either transmits conformational changes from CF(0) to CF(1) or is implicated in proton conduction. In Phocaeicola vulgatus (strain ATCC 8482 / DSM 1447 / JCM 5826 / CCUG 4940 / NBRC 14291 / NCTC 11154) (Bacteroides vulgatus), this protein is ATP synthase subunit delta.